The following is a 199-amino-acid chain: FMN-dependent NADH:quinone oxidoreductase 2 (199 aa).

FMN is bound by residues Ser10, 16–18 (SVS), and 96–99 (MYNF).

Belongs to the azoreductase type 1 family. Homodimer. The cofactor is FMN.

It carries out the reaction 2 a quinone + NADH + H(+) = 2 a 1,4-benzosemiquinone + NAD(+). The catalysed reaction is N,N-dimethyl-1,4-phenylenediamine + anthranilate + 2 NAD(+) = 2-(4-dimethylaminophenyl)diazenylbenzoate + 2 NADH + 2 H(+). Functionally, quinone reductase that provides resistance to thiol-specific stress caused by electrophilic quinones. Its function is as follows. Also exhibits azoreductase activity. Catalyzes the reductive cleavage of the azo bond in aromatic azo compounds to the corresponding amines. The polypeptide is FMN-dependent NADH:quinone oxidoreductase 2 (Pseudomonas fluorescens (strain Pf0-1)).